We begin with the raw amino-acid sequence, 195 residues long: NADH-ubiquinone oxidoreductase subunit 9 (195 aa).

This sequence belongs to the complex I 30 kDa subunit family. In terms of assembly, complex I is composed of about 30 different subunits.

It localises to the mitochondrion inner membrane. It catalyses the reaction a ubiquinone + NADH + 5 H(+)(in) = a ubiquinol + NAD(+) + 4 H(+)(out). Its function is as follows. Core subunit of the mitochondrial membrane respiratory chain NADH dehydrogenase (Complex I) that is believed to belong to the minimal assembly required for catalysis. Complex I functions in the transfer of electrons from NADH to the respiratory chain. The immediate electron acceptor for the enzyme is believed to be ubiquinone. The chain is NADH-ubiquinone oxidoreductase subunit 9 (NAD9) from Acanthamoeba castellanii (Amoeba).